The chain runs to 138 residues: Protein SPMIP3 (138 aa).

The protein is Protein SPMIP3 (SPMIP3) of Bos taurus (Bovine).